The chain runs to 178 residues: Interleukin-10 (178 aa).

A signal peptide spans 1-18; the sequence is MHSSALLCCLVFLAGVAA. 2 disulfide bridges follow: Cys-30-Cys-126 and Cys-80-Cys-132. Asn-134 carries N-linked (GlcNAc...) asparagine glycosylation.

This sequence belongs to the IL-10 family. In terms of assembly, homodimer. Interacts with IL10RA and IL10RB.

Its subcellular location is the secreted. Functionally, major immune regulatory cytokine that acts on many cells of the immune system where it has profound anti-inflammatory functions, limiting excessive tissue disruption caused by inflammation. Mechanistically, IL10 binds to its heterotetrameric receptor comprising IL10RA and IL10RB leading to JAK1 and STAT2-mediated phosphorylation of STAT3. In turn, STAT3 translocates to the nucleus where it drives expression of anti-inflammatory mediators. Targets antigen-presenting cells (APCs) such as macrophages and monocytes and inhibits their release of pro-inflammatory cytokines including granulocyte-macrophage colony-stimulating factor /GM-CSF, granulocyte colony-stimulating factor/G-CSF, IL-1 alpha, IL-1 beta, IL-6, IL-8 and TNF-alpha. Also interferes with antigen presentation by reducing the expression of MHC-class II and co-stimulatory molecules, thereby inhibiting their ability to induce T cell activation. In addition, controls the inflammatory response of macrophages by reprogramming essential metabolic pathways including mTOR signaling. The polypeptide is Interleukin-10 (IL10) (Bos taurus (Bovine)).